Here is a 664-residue protein sequence, read N- to C-terminus: Protein-arginine deiminase type-3 (664 aa).

The protein belongs to the protein arginine deiminase family. It depends on Ca(2+) as a cofactor. In terms of tissue distribution, epidermis and hair follicles.

It localises to the cytoplasm. It carries out the reaction L-arginyl-[protein] + H2O = L-citrullyl-[protein] + NH4(+). Its function is as follows. Catalyzes the deimination of arginine residues of proteins. The sequence is that of Protein-arginine deiminase type-3 (Padi3) from Mus musculus (Mouse).